The sequence spans 518 residues: GMP synthase [glutamine-hydrolyzing] (518 aa).

Positions 8–201 constitute a Glutamine amidotransferase type-1 domain; sequence TVLIIDFGSQ…VHKISGLKGN (194 aa). Residue cysteine 85 is the Nucleophile of the active site. Active-site residues include histidine 175 and glutamate 177. The 192-residue stretch at 202–393 folds into the GMPS ATP-PPase domain; the sequence is WSMASYRDQA…LGLPEQFLGR (192 aa). Residue 229 to 235 participates in ATP binding; sequence SGGVDSS.

As to quaternary structure, homodimer.

It carries out the reaction XMP + L-glutamine + ATP + H2O = GMP + L-glutamate + AMP + diphosphate + 2 H(+). The protein operates within purine metabolism; GMP biosynthesis; GMP from XMP (L-Gln route): step 1/1. In terms of biological role, catalyzes the synthesis of GMP from XMP. In Bartonella quintana (strain Toulouse) (Rochalimaea quintana), this protein is GMP synthase [glutamine-hydrolyzing].